The primary structure comprises 329 residues: Deoxyhypusine hydroxylase (329 aa).

4 HEAT-like PBS-type repeats span residues 65 to 91 (LKHE…VLED), 99 to 124 (RHEA…MRDD), 232 to 258 (FRHE…ALSN), and 265 to 292 (VRHE…FLND). The Fe cation site is built by H67, E68, H100, E101, H234, E235, H267, and E268.

It belongs to the deoxyhypusine hydroxylase family. The cofactor is Fe(2+).

The protein localises to the cytoplasm. It is found in the nucleus. It catalyses the reaction [eIF5A protein]-deoxyhypusine + AH2 + O2 = [eIF5A protein]-hypusine + A + H2O. It participates in protein modification; eIF5A hypusination. Its function is as follows. Catalyzes the hydroxylation of the N(6)-(4-aminobutyl)-L-lysine intermediate to form hypusine, an essential post-translational modification only found in mature eIF-5A factor. This Phaeosphaeria nodorum (strain SN15 / ATCC MYA-4574 / FGSC 10173) (Glume blotch fungus) protein is Deoxyhypusine hydroxylase.